The chain runs to 237 residues: 2-C-methyl-D-erythritol 4-phosphate cytidylyltransferase (237 aa).

This sequence belongs to the IspD/TarI cytidylyltransferase family. IspD subfamily.

The catalysed reaction is 2-C-methyl-D-erythritol 4-phosphate + CTP + H(+) = 4-CDP-2-C-methyl-D-erythritol + diphosphate. The protein operates within isoprenoid biosynthesis; isopentenyl diphosphate biosynthesis via DXP pathway; isopentenyl diphosphate from 1-deoxy-D-xylulose 5-phosphate: step 2/6. In terms of biological role, catalyzes the formation of 4-diphosphocytidyl-2-C-methyl-D-erythritol from CTP and 2-C-methyl-D-erythritol 4-phosphate (MEP). The protein is 2-C-methyl-D-erythritol 4-phosphate cytidylyltransferase of Acaryochloris marina (strain MBIC 11017).